Reading from the N-terminus, the 197-residue chain is Holliday junction branch migration complex subunit RuvA (197 aa).

The domain I stretch occupies residues methionine 1–alanine 64. The segment at serine 65–glycine 143 is domain II. Residues glycine 143 to alanine 147 are flexible linker. The domain III stretch occupies residues alanine 148 to valine 197.

It belongs to the RuvA family. Homotetramer. Forms an RuvA(8)-RuvB(12)-Holliday junction (HJ) complex. HJ DNA is sandwiched between 2 RuvA tetramers; dsDNA enters through RuvA and exits via RuvB. An RuvB hexamer assembles on each DNA strand where it exits the tetramer. Each RuvB hexamer is contacted by two RuvA subunits (via domain III) on 2 adjacent RuvB subunits; this complex drives branch migration. In the full resolvosome a probable DNA-RuvA(4)-RuvB(12)-RuvC(2) complex forms which resolves the HJ.

It localises to the cytoplasm. Its function is as follows. The RuvA-RuvB-RuvC complex processes Holliday junction (HJ) DNA during genetic recombination and DNA repair, while the RuvA-RuvB complex plays an important role in the rescue of blocked DNA replication forks via replication fork reversal (RFR). RuvA specifically binds to HJ cruciform DNA, conferring on it an open structure. The RuvB hexamer acts as an ATP-dependent pump, pulling dsDNA into and through the RuvAB complex. HJ branch migration allows RuvC to scan DNA until it finds its consensus sequence, where it cleaves and resolves the cruciform DNA. The protein is Holliday junction branch migration complex subunit RuvA of Chromobacterium violaceum (strain ATCC 12472 / DSM 30191 / JCM 1249 / CCUG 213 / NBRC 12614 / NCIMB 9131 / NCTC 9757 / MK).